A 632-amino-acid chain; its full sequence is uncharacterized protein (632 aa).

The protein belongs to the MG032/MG096/MG288 family.

This is an uncharacterized protein from Mycoplasma pneumoniae (strain ATCC 29342 / M129 / Subtype 1) (Mycoplasmoides pneumoniae).